The chain runs to 95 residues: Co-chaperonin GroES (95 aa).

It belongs to the GroES chaperonin family. In terms of assembly, heptamer of 7 subunits arranged in a ring. Interacts with the chaperonin GroEL.

The protein resides in the cytoplasm. Together with the chaperonin GroEL, plays an essential role in assisting protein folding. The GroEL-GroES system forms a nano-cage that allows encapsulation of the non-native substrate proteins and provides a physical environment optimized to promote and accelerate protein folding. GroES binds to the apical surface of the GroEL ring, thereby capping the opening of the GroEL channel. This chain is Co-chaperonin GroES, found in Streptococcus equi subsp. equi (strain 4047).